The primary structure comprises 54 residues: Photosystem II reaction center protein K (54 aa).

The propeptide occupies 1-17 (MSFENFAIITLKENVFA). Residues 33–53 (LPIIPVLFLLLAFVWQSAVKF) form a helical membrane-spanning segment.

It belongs to the PsbK family. In terms of assembly, PSII is composed of 1 copy each of membrane proteins PsbA, PsbB, PsbC, PsbD, PsbE, PsbF, PsbH, PsbI, PsbJ, PsbK, PsbL, PsbM, PsbT, PsbY, PsbZ, Psb30/Ycf12, at least 3 peripheral proteins of the oxygen-evolving complex and a large number of cofactors. It forms dimeric complexes.

Its subcellular location is the plastid. It is found in the chloroplast thylakoid membrane. In terms of biological role, one of the components of the core complex of photosystem II (PSII). PSII is a light-driven water:plastoquinone oxidoreductase that uses light energy to abstract electrons from H(2)O, generating O(2) and a proton gradient subsequently used for ATP formation. It consists of a core antenna complex that captures photons, and an electron transfer chain that converts photonic excitation into a charge separation. The sequence is that of Photosystem II reaction center protein K from Euglena deses.